Here is a 1470-residue protein sequence, read N- to C-terminus: Niemann-Pick type C1-related protein (1470 aa).

Over 1–3 the chain is Cytoplasmic; the sequence is MFV. Residues 4-34 lie within the membrane without spanning it; that stretch reads KNFIHKLKELKQKSLDKFANLLYDYGGYVYD. Position 35 (R35) is a topological domain, cytoplasmic. A helical membrane pass occupies residues 36–56; sequence PCTFIICSLICCLLLTCGFYF. Topologically, residues 57-493 are extracellular; that stretch reads KEHEKDIYKL…DEVDRISKID (437 aa). N78, N165, N294, and N361 each carry an N-linked (GlcNAc...) asparagine glycan. Residues 494 to 514 form a helical membrane-spanning segment; sequence NLTRLLLLIGVLLIFMYALFN. The SSD domain maps to 494–653; sequence NLTRLLLLIG…LTFLLSFLCI (160 aa). Topologically, residues 515-524 are cytoplasmic; that stretch reads NVTSVLYRSK. The helical transmembrane segment at 525–549 threads the bilayer; sequence PLCAVMGIFCGFLGFLSGSGFLYFL. The Extracellular segment spans residues 550 to 554; that stretch reads GVKSV. The chain crosses the membrane as a helical span at residues 555-582; sequence PPAETVPFLVIGVGVDDVFVILNSYSLL. Topologically, residues 583-587 are cytoplasmic; that stretch reads FMVKD. A helical transmembrane segment spans residues 588–619; it reads NKKRIQMCLKDSALAITVTTLTNIIAFLISAI. Topologically, residues 620–622 are extracellular; the sequence is SPF. The helical transmembrane segment at 623-659 threads the bilayer; sequence YSICAFSLFTASSLFFGYLMVLTFLLSFLCIEAKLEK. Residues 660–663 are Cytoplasmic-facing; sequence KKRN. An intramembrane segment occupies 664–673; it reads IFTGTFHLFR. Residues 674–1057 are Cytoplasmic-facing; the sequence is SIFMKSSKKN…IYEEPKGNIG (384 aa). Residues 1058-1073 lie within the membrane without spanning it; sequence KYFRSLVKNYYVPFLS. Position 1074 (S1074) is a topological domain, cytoplasmic. The chain crosses the membrane as a helical span at residues 1075–1098; sequence RFGKTIVYIMFTIIIAMSIYGCTL. The Extracellular portion of the chain corresponds to 1099 to 1300; sequence MKKGIKYDKA…NHNVQMVCFH (202 aa). N1218 carries an N-linked (GlcNAc...) asparagine glycan. A helical membrane pass occupies residues 1301-1334; that stretch reads LSSIFNETDESIIEVTLINLGITILTILVVTAYI. Topologically, residues 1335 to 1337 are cytoplasmic; it reads IKG. A helical membrane pass occupies residues 1338–1361; the sequence is FYSCVIIALIIFLIDLCIFGFMCL. Residues 1362–1367 lie on the Extracellular side of the membrane; the sequence is CGITMN. A helical transmembrane segment spans residues 1368–1394; that stretch reads IISMVILVLSVGFSIDHTSHIVQAFSH. The Cytoplasmic portion of the chain corresponds to 1395–1399; sequence SMGRT. A helical transmembrane segment spans residues 1400 to 1431; it reads RDEKMKESLHLMIGPVLHSGLSTWFVISTLFF. The Extracellular segment spans residues 1432–1434; the sequence is SNK. Residues 1435–1466 form a helical membrane-spanning segment; the sequence is DFTVIFFQTLSLVLFFSITFSSMFLPVLLSSF. The Cytoplasmic portion of the chain corresponds to 1467–1470; sequence GPLH.

Belongs to the patched family.

Its subcellular location is the cell membrane. The enzyme catalyses cholesterol(in) = cholesterol(out). Functionally, facilitates cholesterol efflux from membranes in a pH-dependent manner. Required for maintaining normal parasite plasma membrane lipid composition. Required for the proper functioning of digestive vacuole. Required for the viability of blood-stage parasites. This chain is Niemann-Pick type C1-related protein, found in Plasmodium falciparum (isolate 3D7).